Consider the following 459-residue polypeptide: Ribulose bisphosphate carboxylase large chain (459 aa).

K4 bears the N6,N6,N6-trimethyllysine mark. N113 and T163 together coordinate substrate. Catalysis depends on K165, which acts as the Proton acceptor. K167 provides a ligand contact to substrate. Mg(2+)-binding residues include K191, D193, and E194. K191 carries the post-translational modification N6-carboxylysine. H284 serves as the catalytic Proton acceptor. Residues R285, H317, and S369 each coordinate substrate.

Belongs to the RuBisCO large chain family. Type I subfamily. In terms of assembly, heterohexadecamer of 8 large chains and 8 small chains; disulfide-linked. The disulfide link is formed within the large subunit homodimers. Requires Mg(2+) as cofactor. In terms of processing, the disulfide bond which can form in the large chain dimeric partners within the hexadecamer appears to be associated with oxidative stress and protein turnover.

Its subcellular location is the plastid. The protein localises to the chloroplast. It carries out the reaction 2 (2R)-3-phosphoglycerate + 2 H(+) = D-ribulose 1,5-bisphosphate + CO2 + H2O. The enzyme catalyses D-ribulose 1,5-bisphosphate + O2 = 2-phosphoglycolate + (2R)-3-phosphoglycerate + 2 H(+). RuBisCO catalyzes two reactions: the carboxylation of D-ribulose 1,5-bisphosphate, the primary event in carbon dioxide fixation, as well as the oxidative fragmentation of the pentose substrate in the photorespiration process. Both reactions occur simultaneously and in competition at the same active site. The protein is Ribulose bisphosphate carboxylase large chain of Apium graveolens (Celery).